Consider the following 469-residue polypeptide: Pentatricopeptide repeat-containing protein At2g34370, mitochondrial (469 aa).

Residues 1-65 (MVRLVCSRIL…QNRSFVQCRR (65 aa)) constitute a mitochondrion transit peptide. PPR repeat units lie at residues 142 to 172 (DARS…MPKR), 173 to 207 (NSET…GNKP), 208 to 238 (DKEI…MYRD), and 244 to 274 (SMED…MTVE). A type DYW motif region spans residues 375–469 (DIGFVPATRV…NGVCSCKDYW (95 aa)).

This sequence belongs to the PPR family. PCMP-H subfamily.

It localises to the mitochondrion. The sequence is that of Pentatricopeptide repeat-containing protein At2g34370, mitochondrial (PCMP-H25) from Arabidopsis thaliana (Mouse-ear cress).